Consider the following 291-residue polypeptide: Ribosomal RNA small subunit methyltransferase A (291 aa).

Positions 37, 39, 64, 85, 110, and 131 each coordinate S-adenosyl-L-methionine.

The protein belongs to the class I-like SAM-binding methyltransferase superfamily. rRNA adenine N(6)-methyltransferase family. RsmA subfamily.

The protein localises to the cytoplasm. The catalysed reaction is adenosine(1518)/adenosine(1519) in 16S rRNA + 4 S-adenosyl-L-methionine = N(6)-dimethyladenosine(1518)/N(6)-dimethyladenosine(1519) in 16S rRNA + 4 S-adenosyl-L-homocysteine + 4 H(+). Specifically dimethylates two adjacent adenosines (A1518 and A1519) in the loop of a conserved hairpin near the 3'-end of 16S rRNA in the 30S particle. May play a critical role in biogenesis of 30S subunits. The sequence is that of Ribosomal RNA small subunit methyltransferase A from Dehalococcoides mccartyi (strain CBDB1).